Reading from the N-terminus, the 214-residue chain is MNRLIIVFIVVTMICAATALSTKRRINKEEKDEKRSVAVAGAVIEGATLTFNVLQTVLKALGDISRKIAVGIDNESGMTWTAMNTYFRSGTSDIVLPYEVPHGKALLYNGQKDRGPVATGVVGVLAYAMSDGNTLAVLFSIPFDYNLYSNWWNVKVYKGHRRADQRMYEELYYNLSPFRGDNGWHNRDLGYGLTSRGFMNSSGQSILEIHVTKA.

Residues 1–19 (MNRLIIVFIVVTMICAATA) form the signal peptide. A propeptide spanning residues 20-35 (LSTKRRINKEEKDEKR) is cleaved from the precursor. Residues 38 to 47 (AVAGAVIEGA) form a plays an important role in the hemolytic activity region. The tract at residues 46–65 (GATLTFNVLQTVLKALGDIS) is N-terminal region. Residues Ser89, Val122, Ser140, Pro142, Tyr168, Tyr172, and Tyr173 each coordinate phosphocholine. A trp-rich region, which is important for the binding to lipid membrane region spans residues 140–155 (SIPFDYNLYSNWWNVK). Residues 179–181 (RGD) carry the Cell attachment site, crucial for protein stability motif.

This sequence belongs to the actinoporin family. Sea anemone subfamily. Octamer or nonamer in membranes. Monomer in the soluble state.

Its subcellular location is the secreted. The protein resides in the nematocyst. It is found in the target cell membrane. Its function is as follows. Pore-forming protein that forms cations-selective hydrophilic pores of around 1 nm and causes cardiac stimulation and cytolysis. Pore formation is a multi-step process that involves specific recognition of membrane sphingomyelin (but neither cholesterol nor phosphatidylcholine) using aromatic rich region and adjacent phosphocholine (POC) binding site, firm binding to the membrane (mainly driven by hydrophobic interactions) accompanied by the transfer of the N-terminal region to the lipid-water interface and finally pore formation after oligomerization of monomers. In Actinia tenebrosa (Australian red waratah sea anemone), this protein is Cytolysin tenebrosin-B.